The primary structure comprises 530 residues: Estrogen receptor beta (530 aa).

Positions 1-148 (MEIKNSPSSL…SPSAKRDAHF (148 aa)) are modulating. Position 61 is a phosphoserine; alternate (Ser61). The O-linked (GlcNAc) serine; alternate glycan is linked to Ser61. Phosphoserine; by MAPK occurs at positions 87 and 105. 2 consecutive NR C4-type zinc fingers follow at residues 149–169 (CAVC…CEGC) and 185–209 (CPAT…LRKC). Positions 149–214 (CAVCSDYASG…RLRKCYEVGM (66 aa)) form a DNA-binding region, nuclear receptor. The 235-residue stretch at 264–498 (SPEQLVLTLL…DLLLEMLNAH (235 aa)) folds into the NR LBD domain. Positions 506 to 515 (SISGSECCST) are enriched in polar residues. Residues 506–530 (SISGSECCSTEDSKSKEGSQNLQSQ) are disordered.

It belongs to the nuclear hormone receptor family. NR3 subfamily. As to quaternary structure, binds DNA as a homodimer. Can form a heterodimer with ESR1. Interacts with NCOA1, NCOA3, NCOA5 and NCOA6 coactivators, leading to a strong increase of transcription of target genes. Interacts with UBE1C and AKAP13. Interacts with DNTTIP2. Interacts with CCDC62 in the presence of estradiol/E2; this interaction seems to enhance the transcription of target genes. Interacts with DNAAF4. Interacts with PRMT2. Interacts with CCAR2 (via N-terminus) in a ligand-independent manner. Interacts with RBM39, in the presence of estradiol (E2). Interacts with STUB1/CHIP. Phosphorylation at Ser-87 and Ser-105 recruits NCOA1. In terms of tissue distribution, expressed in prostate, ovary, Leydig cells and in epithelium of the efferent ductules and of the initial segment of the epididymis.

The protein resides in the nucleus. Its function is as follows. Nuclear hormone receptor. Binds estrogens with an affinity similar to that of ESR1/ER-alpha, and activates expression of reporter genes containing estrogen response elements (ERE) in an estrogen-dependent manner. The polypeptide is Estrogen receptor beta (Esr2) (Mus musculus (Mouse)).